Here is a 385-residue protein sequence, read N- to C-terminus: Methionine aminopeptidase 1 (385 aa).

A C6H2-type zinc finger spans residues 6–59; that stretch reads SRVCETEGCSSEAKLQCPTCIKLGIQGSYFCSQECFKGSWASHKLLHKKAKDDK. Zn(2+) is bound by residues cysteine 9, cysteine 14, cysteine 22, cysteine 25, cysteine 36, cysteine 40, histidine 48, and histidine 52. Histidine 203 contacts a protein. Positions 220, 231, and 294 each coordinate Zn(2+). Position 301 (histidine 301) interacts with a protein. 2 residues coordinate Zn(2+): glutamate 327 and glutamate 358.

Belongs to the peptidase M24A family. Methionine aminopeptidase type 1 subfamily. As to quaternary structure, associates with the 60S ribosomal subunit of the 80S translational complex. Zn(2+) serves as cofactor. The cofactor is Co(2+). Requires Mn(2+) as cofactor. It depends on Fe(2+) as a cofactor.

It is found in the cytoplasm. It catalyses the reaction Release of N-terminal amino acids, preferentially methionine, from peptides and arylamides.. Functionally, cotranslationally removes the N-terminal methionine from nascent proteins. The N-terminal methionine is often cleaved when the second residue in the primary sequence is small and uncharged (Met-Ala-, Cys, Gly, Pro, Ser, Thr, or Val). This Xenopus tropicalis (Western clawed frog) protein is Methionine aminopeptidase 1 (metap1).